The chain runs to 313 residues: MMENYKHTTVLLDEAVNGLNIRPDGTYIDGTFGRGGHSRLILSQLGEEGRLLAIDRDPQAIAVAKTIDDPRFSIIHGPFSALGEYVAERDLIGKIDGILLDLGVSSPQLDDAERGFSFMRDGPLDMRMDPTRGQSAAEWLQTAEEADIAWVLKTYGEERFAKRIARAIVERNREQPMTRTKELAEVVAAATPVKDKFKHPATRTFQAVRIWVNSELEEIEQALKSSLNVLAPGGRLSIISFHSLEDRIVKRFMRENSRGPQVPAGLPMTEEQLKKLGGRQLRALGKLMPGEEEVAENPRARSSVLRIAERTNA.

S-adenosyl-L-methionine-binding positions include 35–37 (GGH), D55, F79, D101, and Q108.

This sequence belongs to the methyltransferase superfamily. RsmH family.

It localises to the cytoplasm. The catalysed reaction is cytidine(1402) in 16S rRNA + S-adenosyl-L-methionine = N(4)-methylcytidine(1402) in 16S rRNA + S-adenosyl-L-homocysteine + H(+). Functionally, specifically methylates the N4 position of cytidine in position 1402 (C1402) of 16S rRNA. The chain is Ribosomal RNA small subunit methyltransferase H from Escherichia coli O81 (strain ED1a).